Reading from the N-terminus, the 482-residue chain is MDFHSCLYDIAERLGNEELAALKFLCLDHIPQKKQESINDVLVLFQRLQEEGMLEEDNLSFLKELLFHISRRDLLSRVLKSSPEEMVRELQVLGKAQVSAYRVMLFKLSEDMDKEDLKSFKFLLITEIPKCKLQDNSSLLDIFVEMEKRTILAENNLVTLKSICFRVNRSLLGRIDDYERSSTERRMSTEGGEELPVSVLDEVTIKMQDMWDSPGEQESESLNSDNVYQMKSKPRGYCLIFNNNNFSKAREDIPKLSNMRDRKGTNYDEEALSKTFKELHFEIVSFSDCTASQIHEVLVSYQSKDHKGKDCFICCILSHGDKGIVYGTDGKEASIYELTSYFTGSKCPSLAGKPKIFFIQACQGNNFQKAVPVPDETGLEQEHVLEEDSSSYKNYIPDEADFLLGMATVKNCVSYRDPTRGTWYIQSLCQSLRERCPRGEDILSILTGVNYDVSNKDNPRNMGKQMPQPIFTLRKKLFFPPN.

The propeptide occupies 1-218 (MDFHSCLYDI…DMWDSPGEQE (218 aa)). DED domains lie at 2 to 80 (DFHS…RVLK) and 100 to 177 (AYRV…RIDD). Residues serine 188 and serine 213 each carry the phosphoserine modification. Histidine 319 is a catalytic residue. At tyrosine 336 the chain carries Phosphotyrosine. The active site involves cysteine 362. Positions 379 to 388 (LEQEHVLEED) are excised as a propeptide. A Phosphoserine; by CDK1 modification is found at serine 390.

Belongs to the peptidase C14A family. As to quaternary structure, heterotetramer that consists of two anti-parallel arranged heterodimers, each one formed by a 18 kDa (p18) and a 10 kDa (p10) subunit. Component of the death-induced signaling complex (DISC) composed of cell surface receptor FAS/CD95 or TNFRSF1A, adapter protein FADD and the CASP8 protease; recruitment of CASP8 to the complex is required for processing of CASP8 into the p18 and p10 subunits. Component of the AIM2 PANoptosome complex, a multiprotein complex that drives inflammatory cell death (PANoptosis). Interacts with CFLAR and PEA15. Interacts with RFFL and RNF34; negatively regulate CASP8 through proteasomal degradation. Interacts with TNFAIP8L2. Interacts with CASP8AP2. Interacts with NOL3; decreases CASP8 activity in a mitochondria localization- and phosphorylation-dependent manner and this interaction is dissociated by calcium. Interacts with UBR2. Interacts with RIPK1. Interacts with stimulated TNFRSF10B; this interaction is followed by CASP8 proteolytic cleavage and activation. Generation of the subunits requires association with the death-inducing signaling complex (DISC), whereas additional processing is likely due to the autocatalytic activity of the activated protease. GZMB and CASP10 can be involved in these processing events. Post-translationally, phosphorylation on Ser-389 during mitosis by CDK1 inhibits activation by proteolysis and prevents apoptosis. This phosphorylation occurs in cancer cell lines, as well as in primary breast tissues and lymphocytes.

It is found in the cytoplasm. It localises to the nucleus. The catalysed reaction is Strict requirement for Asp at position P1 and has a preferred cleavage sequence of (Leu/Asp/Val)-Glu-Thr-Asp-|-(Gly/Ser/Ala).. Its activity is regulated as follows. CASP8 activity is restricted by RIPK1. In terms of biological role, thiol protease that plays a key role in programmed cell death by acting as a molecular switch for apoptosis, necroptosis and pyroptosis, and is required to prevent tissue damage during embryonic development and adulthood. Initiator protease that induces extrinsic apoptosis by mediating cleavage and activation of effector caspases responsible for FAS/CD95-mediated and TNFRSF1A-induced cell death. Cleaves and activates effector caspases CASP3, CASP4, CASP6, CASP7, CASP9 and CASP10. Binding to the adapter molecule FADD recruits it to either receptor FAS/CD95 or TNFRSF1A. The resulting aggregate called the death-inducing signaling complex (DISC) performs CASP8 proteolytic activation. The active dimeric enzyme is then liberated from the DISC and free to activate downstream apoptotic proteases. Proteolytic fragments of the N-terminal propeptide (termed CAP3, CAP5 and CAP6) are likely retained in the DISC. In addition to extrinsic apoptosis, also acts as a negative regulator of necroptosis: acts by cleaving RIPK1 at 'Asp-325', which is crucial to inhibit RIPK1 kinase activity, limiting TNF-induced apoptosis, necroptosis and inflammatory response. Also able to initiate pyroptosis by mediating cleavage and activation of gasdermin-C and -D (GSDMC and GSDMD, respectively): gasdermin cleavage promotes release of the N-terminal moiety that binds to membranes and forms pores, triggering pyroptosis. Initiates pyroptosis following inactivation of MAP3K7/TAK1. Also acts as a regulator of innate immunity by mediating cleavage and inactivation of N4BP1 downstream of TLR3 or TLR4, thereby promoting cytokine production. May participate in the Granzyme B (GZMB) cell death pathways. Cleaves PARP1 and PARP2. The chain is Caspase-8 from Rattus norvegicus (Rat).